The following is a 360-amino-acid chain: Homeobox protein ceh-60 (360 aa).

A PBC-A region spans residues 1 to 82; sequence MDNLIKQLQM…ENPTFPLEEV (82 aa). In terms of domain architecture, PBC spans 1–179; sequence MDNLIKQLQM…ILVLRREIEQ (179 aa). The interval 85–179 is PBC-B; sequence EKDEEWQPLE…ILVLRREIEQ (95 aa). Positions 180–242 form a DNA-binding region, homeobox; sequence QGRKRRNFDK…NQRIRTKQQA (63 aa).

Belongs to the TALE/PBX homeobox family. In terms of assembly, forms a heterodimer with homeobox unc-62. Interacts with pqm-1.

It localises to the nucleus. Probable transcription regulator which binds to DNA, repressing genes involved in longevity and stress, while activating genes involved in reproduction, such as the vitellogenins. Associates with homeobox unc-62 to regulate gene expression, including repression of genes involved in innate immunity. Required for intestinal expression of vitellogenin genes. Negatively modulates longevity, probably independently of effects on vitellogenesis. Involved in lipid homeostasis, contributing to the reallocation of intestinal lipids to the germline and to the formation of the cuticle. Associates with transcriptional regulator pqm-1 at the daf-16 associated element within the promoters of stress-responsive genes to regulate expression. The polypeptide is Homeobox protein ceh-60 (Caenorhabditis elegans).